The primary structure comprises 608 residues: Glutamine--fructose-6-phosphate aminotransferase [isomerizing] (608 aa).

Cys2 serves as the catalytic Nucleophile; for GATase activity. The Glutamine amidotransferase type-2 domain maps to 2–217 (CGIVGIVGTQ…DGDCAIVTRD (216 aa)). 2 consecutive SIS domains span residues 281–422 (ADKA…ARGT) and 456–598 (LSRD…VDQP). Residue Lys603 is the For Fru-6P isomerization activity of the active site.

Homodimer.

The protein resides in the cytoplasm. It carries out the reaction D-fructose 6-phosphate + L-glutamine = D-glucosamine 6-phosphate + L-glutamate. Catalyzes the first step in hexosamine metabolism, converting fructose-6P into glucosamine-6P using glutamine as a nitrogen source. The chain is Glutamine--fructose-6-phosphate aminotransferase [isomerizing] from Agrobacterium fabrum (strain C58 / ATCC 33970) (Agrobacterium tumefaciens (strain C58)).